A 212-amino-acid chain; its full sequence is Thymidylate kinase (212 aa).

ATP contacts are provided by residues 16–21, arginine 97, arginine 182, and lysine 192; that span reads RAGKTT.

This sequence belongs to the thymidylate kinase family. Mg(2+) serves as cofactor.

The enzyme catalyses dTMP + ATP = dTDP + ADP. It participates in pyrimidine metabolism; dTTP biosynthesis. Functionally, catalyzes the phosphorylation of thymidine monophosphate (dTMP) to thymidine diphosphate (dTDP), the immediate precursor for the DNA building block dTTP, with ATP as the preferred phosphoryl donor in the presence of Mg(2+). The sequence is that of Thymidylate kinase (dtymk) from Danio rerio (Zebrafish).